The sequence spans 638 residues: uncharacterized protein (638 aa).

This is an uncharacterized protein from Homo sapiens (Human).